The sequence spans 2440 residues: Nuclear receptor corepressor 1 (2440 aa).

Over residues 1–18 the composition is skewed to polar residues; the sequence is MSSSGYPPNQGAFSTEQS. Disordered regions lie at residues 1 to 177 and 206 to 231; these read MSSS…SKLS and QQQLEEEAAKPPEPEKPVSPPPVEQK. An interaction with ZBTB33 and HEXIM1 region spans residues 1–373; sequence MSSSGYPPNQ…QRGAGLSATI (373 aa). The span at 51-64 shows a compositional bias: low complexity; it reads SQASQLLQQQQQQQ. 3 stretches are compositionally biased toward basic and acidic residues: residues 77 to 88, 99 to 119, and 141 to 155; these read PGSDRPQERRTS, VDHDSLESKRPRLEQVSDSHF, and ADAKKDPAFGGKHEA. A Phosphoserine modification is found at S172. The stretch at 174–216 forms a coiled coil; that stretch reads SKLSKEELIQSMDRVDREIAKVEQQILKLKKKQQQLEEEAAKP. The span at 212–221 shows a compositional bias: basic and acidic residues; sequence EAAKPPEPEK. The residue at position 224 (S224) is a Phosphoserine. The interval 254–312 is interaction with SIN3A/B; it reads FEGLGPKVELPLYNQPSDTKVYHENIKTNQVMRKKLILFFKRRNHARKQREQKICQRYD. Residues 299–328 are a coiled coil; the sequence is ARKQREQKICQRYDQLMEAWEKKVDRIENN. Residues 435–486 enclose the SANT 1 domain; the sequence is QFMNVWTDHEKEIFKDKFIQHPKNFGLIASYLERKSVPDCVLYYYLTKKNEN. Disordered stretches follow at residues 497–632 and 677–915; these read KRRG…TEEE and NLLQ…GSIL. Residues 501 to 557 are a coiled coil; it reads RNQQIARPSQEEKVEEKEEDKAEKTEKKEEEKKDEEEKDEKEDSKENTKEKDKIDGT. Composition is skewed to basic and acidic residues over residues 509 to 531 and 541 to 556; these read SQEEKVEEKEEDKAEKTEKKEEE and KEDSKENTKEKDKIDG. Positions 592 to 605 are enriched in low complexity; that stretch reads EAAAASAAAAAATE. A compositionally biased stretch (pro residues) spans 606–617; the sequence is EPPPPLPPPPEP. Positions 623 to 674 constitute an SANT 2 domain; it reads VETSRWTEEEMEVAKKGLVEHGRNWAAIAKMVGTKSEAQCKNFYFNYKRRHN. Positions 698–708 are enriched in polar residues; that stretch reads QCESVASTVSA. The span at 709-728 shows a compositional bias: acidic residues; it reads QEDEDIEASNEEENPEDSEV. Positions 752 to 768 are enriched in low complexity; it reads ELEPTTETAPSTSPSLA. A compositionally biased stretch (polar residues) spans 781–792; it reads ETQVNDSISAET. Positions 820–859 are enriched in basic and acidic residues; the sequence is DSVDVEVRVPENHASKVEGDNTKERDLDRASEKVEPRDED. 2 stretches are compositionally biased toward polar residues: residues 864–883 and 906–915; these read QQINAQRPEPQSDNDSSATC and SLLNPTGSIL. The interval 988–1816 is interaction with ETO; sequence RSSTSPCGTS…QGLPASRYNT (829 aa). S999 is modified (phosphoserine). Residues 1022 to 1046 are disordered; sequence VRLPTTRPTRPPPPLIPSSKTTVAS. K1106 is covalently cross-linked (Glycyl lysine isopeptide (Lys-Gly) (interchain with G-Cter in SUMO1); alternate). K1106 participates in a covalent cross-link: Glycyl lysine isopeptide (Lys-Gly) (interchain with G-Cter in SUMO2); alternate. At S1111 the chain carries Phosphoserine. A Glycyl lysine isopeptide (Lys-Gly) (interchain with G-Cter in SUMO2) cross-link involves residue K1184. The segment at 1184–1204 is disordered; that stretch reads KGSISRMPIEDSSPEKGREEA. Residues S1195, S1196, S1249, S1263, S1281, and S1322 each carry the phosphoserine modification. At K1336 the chain carries N6-acetyllysine. At T1367 the chain carries Phosphothreonine. K1389 participates in a covalent cross-link: Glycyl lysine isopeptide (Lys-Gly) (interchain with G-Cter in SUMO2). K1412 is covalently cross-linked (Glycyl lysine isopeptide (Lys-Gly) (interchain with G-Cter in SUMO2); alternate). At K1412 the chain carries N6-acetyllysine; alternate. A disordered region spans residues 1440-1459; the sequence is AGETVRSRHTSVVSSGPSVL. Phosphoserine is present on residues S1450 and S1472. Residues 1488–1512 are compositionally biased toward polar residues; that stretch reads YQNTMSRGSPMMNRTSDVTISSNKS. A disordered region spans residues 1488–1554; that stretch reads YQNTMSRGSP…SPFDPHHRGS (67 aa). Positions 1501 to 2440 are interaction with C1D; that stretch reads RTSDVTISSN…QYETLSDSDD (940 aa). K1518 participates in a covalent cross-link: Glycyl lysine isopeptide (Lys-Gly) (interchain with G-Cter in SUMO2). S1592 bears the Phosphoserine mark. Disordered stretches follow at residues 1690–1759 and 1884–1922; these read PRPY…SPSP and SSAFPSGKPQPHSSVVYSEAGKDKGPPPKSRYEEELRTR. Composition is skewed to basic and acidic residues over residues 1712 to 1729 and 1903 to 1921; these read AEREREREREKERERERI and AGKDKGPPPKSRYEEELRT. The CORNR box 1 motif lies at 1933 to 1937; it reads IDVII. The disordered stretch occupies residues 1943-1969; it reads SDKDARERGSQSSDSSSSLSSHRYETP. Residues 1952-1963 are compositionally biased toward low complexity; the sequence is SQSSDSSSSLSS. A phosphoserine mark is found at S1977 and S1981. Positions 2006 to 2041 are disordered; that stretch reads PTRQYEGPLHHYRPQQESPSPQQQLPPSSQAEGMGQ. Residues 2020-2035 are compositionally biased toward low complexity; that stretch reads QQESPSPQQQLPPSSQ. Residues 2032-2115 are ID1; the sequence is PSSQAEGMGQ…QAQSVHHQRP (84 aa). The interval 2047 to 2050 is required for interaction with RARA in the absence of its ligand; that stretch reads RLIT. The CORNR box 2 motif lies at 2055-2059; that stretch reads ICQII. Positions 2067-2086 are enriched in low complexity; that stretch reads QVSSQTPQQPPTSTFQNSPS. Residues 2067–2155 are disordered; that stretch reads QVSSQTPQQP…PYEPISPPQV (89 aa). Residues 2087–2110 are compositionally biased toward polar residues; sequence ALVSTPVRTKTSNRYSPESQAQSV. A phosphoserine mark is found at S2102, S2120, S2136, S2151, and S2184. Over residues 2124 to 2142 the composition is skewed to basic and acidic residues; that stretch reads LVDKSRGSRPGKSPERSHV. Residues 2212 to 2273 form an ID2 region; the sequence is IFRKLNSSGG…EDIIRKALMG (62 aa). The short motif at 2263–2267 is the CORNR box 3 element; the sequence is LEDII. The tract at residues 2287–2440 is disordered; the sequence is SQPMGVVPGT…QYETLSDSDD (154 aa). Residues 2296 to 2305 are compositionally biased toward polar residues; sequence TANTSVVTSG. The residue at position 2399 (T2399) is a Phosphothreonine. 2 stretches are compositionally biased toward polar residues: residues 2407–2418 and 2431–2440; these read AVNQAAPHQQNR and QYETLSDSDD. A phosphoserine mark is found at S2436 and S2438.

This sequence belongs to the N-CoR nuclear receptor corepressors family. Forms a large corepressor complex that contains SIN3A/B and histone deacetylases HDAC1 and HDAC2. This complex associates with the thyroid receptor (TR) and the retinoid acid receptor (RAR) in the absence of ligand. Interacts directly with RARA; the interaction is facilitated with RARA trimethylation. Component of the N-Cor repressor complex, at least composed of CBFA2T3, HEXIM1, NCOR1, NCOR2, HDAC3, TBL1X, TBL1XR1, CORO2A and GPS2. Interacts with ZBTB33; the interaction serves to recruit the N-CoR complex to promoter regions containing methylated CpG dinucleotides. Interacts with TRIM28 and KDM3A. Interacts (via the RD1 domain) with BAZ1A (via its N-terminal); the interaction corepresses a number of NCOR1-regulated genes. Interacts with BCL6, C1D, DACH1, HEXIM1, HDAC7, RORA, RORC, SAP30, SIAH2, SIN3A and SIN3B. May interact with DEAF1. Interacts with RXRA. Interacts with SETD5. Interacts with VDR. Interacts with ZBTB7A. Interacts with AR. Interacts with HDAC3. Post-translationally, ubiquitinated; mediated by SIAH2 and leading to its subsequent proteasomal degradation.

The protein resides in the nucleus. In terms of biological role, mediates transcriptional repression by certain nuclear receptors. Part of a complex which promotes histone deacetylation and the formation of repressive chromatin structures which may impede the access of basal transcription factors. Participates in the transcriptional repressor activity produced by BCL6. Recruited by ZBTB7A to the androgen response elements/ARE on target genes, negatively regulates androgen receptor signaling and androgen-induced cell proliferation. Mediates the NR1D1-dependent repression and circadian regulation of TSHB expression. The NCOR1-HDAC3 complex regulates the circadian expression of the core clock gene ARTNL/BMAL1 and the genes involved in lipid metabolism in the liver. In Homo sapiens (Human), this protein is Nuclear receptor corepressor 1 (NCOR1).